A 94-amino-acid polypeptide reads, in one-letter code: uncharacterized protein (94 aa).

A disordered region spans residues 1–22 (MATLQQAQQQNNQLTQQNNQLT). Positions 1 to 77 (MATLQQAQQQ…NRLHSENHRL (77 aa)) form a coiled coil.

This is an uncharacterized protein from Acheta domesticus (House cricket).